The following is a 358-amino-acid chain: Aminodeoxyfutalosine deaminase (358 aa).

Zn(2+) is bound by residues histidine 32 and histidine 34. Positions 87, 154, and 188 each coordinate substrate. Histidine 215 is a Zn(2+) binding site. Glutamate 218 acts as the Proton donor in catalysis. Residue aspartate 296 participates in Zn(2+) binding.

The protein belongs to the metallo-dependent hydrolases superfamily. Adenosine and AMP deaminases family. It depends on Zn(2+) as a cofactor.

It catalyses the reaction 6-amino-6-deoxyfutalosine + H2O + H(+) = futalosine + NH4(+). Its pathway is quinol/quinone metabolism; menaquinone biosynthesis. Functionally, catalyzes the deamination of aminodeoxyfutalosine (AFL) into futalosine (FL), a step in the biosynthesis of menaquinone (MK, vitamin K2). To a lesser extent, can also deaminate adenosine, 5'-methylthioadenosine, 5'-deoxyadenosine, and 2'-deoxyadenosine. The polypeptide is Aminodeoxyfutalosine deaminase (add2) (Streptomyces avermitilis (strain ATCC 31267 / DSM 46492 / JCM 5070 / NBRC 14893 / NCIMB 12804 / NRRL 8165 / MA-4680)).